Here is a 387-residue protein sequence, read N- to C-terminus: 3-ketoacyl-CoA thiolase (387 aa).

Residue C91 is the Acyl-thioester intermediate of the active site. Active-site proton acceptor residues include H343 and C373.

It belongs to the thiolase-like superfamily. Thiolase family. As to quaternary structure, heterotetramer of two alpha chains (FadB) and two beta chains (FadA).

Its subcellular location is the cytoplasm. It carries out the reaction an acyl-CoA + acetyl-CoA = a 3-oxoacyl-CoA + CoA. It participates in lipid metabolism; fatty acid beta-oxidation. Functionally, catalyzes the final step of fatty acid oxidation in which acetyl-CoA is released and the CoA ester of a fatty acid two carbons shorter is formed. This is 3-ketoacyl-CoA thiolase from Vibrio cholerae serotype O1 (strain ATCC 39315 / El Tor Inaba N16961).